The following is a 287-amino-acid chain: ATP synthase gamma chain (287 aa).

The protein belongs to the ATPase gamma chain family. F-type ATPases have 2 components, CF(1) - the catalytic core - and CF(0) - the membrane proton channel. CF(1) has five subunits: alpha(3), beta(3), gamma(1), delta(1), epsilon(1). CF(0) has three main subunits: a, b and c.

It localises to the cell inner membrane. Its function is as follows. Produces ATP from ADP in the presence of a proton gradient across the membrane. The gamma chain is believed to be important in regulating ATPase activity and the flow of protons through the CF(0) complex. This is ATP synthase gamma chain from Baumannia cicadellinicola subsp. Homalodisca coagulata.